Consider the following 116-residue polypeptide: Large ribosomal subunit protein uL18 (116 aa).

The protein belongs to the universal ribosomal protein uL18 family. Part of the 50S ribosomal subunit; part of the 5S rRNA/L5/L18/L25 subcomplex. Contacts the 5S and 23S rRNAs.

In terms of biological role, this is one of the proteins that bind and probably mediate the attachment of the 5S RNA into the large ribosomal subunit, where it forms part of the central protuberance. The protein is Large ribosomal subunit protein uL18 of Shewanella amazonensis (strain ATCC BAA-1098 / SB2B).